The chain runs to 189 residues: Small ribosomal subunit protein uS7 (189 aa).

This sequence belongs to the universal ribosomal protein uS7 family. In terms of assembly, part of the 30S ribosomal subunit.

Functionally, one of the primary rRNA binding proteins, it binds directly to 16S rRNA where it nucleates assembly of the head domain of the 30S subunit. Is located at the subunit interface close to the decoding center. This Methanosarcina mazei (strain ATCC BAA-159 / DSM 3647 / Goe1 / Go1 / JCM 11833 / OCM 88) (Methanosarcina frisia) protein is Small ribosomal subunit protein uS7.